The sequence spans 480 residues: 2-phosphoxylose phosphatase 1 (480 aa).

The Cytoplasmic segment spans residues 1–6 (MLHRNR). Residues 7-27 (FLVLLALAGLLAFLSLSLQFF) traverse the membrane as a helical; Signal-anchor for type II membrane protein segment. At 28–480 (HLIPVSATKN…YYDACHGEGA (453 aa)) the chain is on the lumenal side. The active-site Nucleophile is the H97. Residues N194, N305, and N354 are each glycosylated (N-linked (GlcNAc...) asparagine). Catalysis depends on D379, which acts as the Proton donor.

It belongs to the histidine acid phosphatase family. Interacts with B3GAT3; the interaction increases the 2-phosphoxylose phosphatase activity of PXYLP1 during completion of linkage region formation in a B3GAT3-mediated manner.

The protein resides in the golgi apparatus membrane. It carries out the reaction 3-O-[beta-D-GlcA-(1-&gt;3)-beta-D-Gal-(1-&gt;3)-beta-D-Gal-(1-&gt;4)-beta-D-2-O-P-Xyl]-L-seryl-[protein] + H2O = 3-O-(beta-D-GlcA-(1-&gt;3)-beta-D-Gal-(1-&gt;3)-beta-D-Gal-(1-&gt;4)-beta-D-Xyl)-L-seryl-[protein] + phosphate. Functionally, responsible for the 2-O-dephosphorylation of xylose in the glycosaminoglycan-protein linkage region of proteoglycans thereby regulating the amount of mature glycosaminoglycan (GAG) chains. Sulfated glycosaminoglycans (GAGs), including heparan sulfate and chondroitin sulfate, are synthesized on the so-called common GAG-protein linkage region (GlcUAbeta1-3Galbeta1-3Galbeta1-4Xylbeta1-O-Ser) of core proteins, which is formed by the stepwise addition of monosaccharide residues by the respective specific glycosyltransferases. Xylose 2-O-dephosphorylation during completion of linkage region formation is a prerequisite for the initiation and efficient elongation of the repeating disaccharide region of GAG chains. The chain is 2-phosphoxylose phosphatase 1 from Mus musculus (Mouse).